Reading from the N-terminus, the 544-residue chain is GMP synthase [glutamine-hydrolyzing] (544 aa).

In terms of domain architecture, Glutamine amidotransferase type-1 spans 12–210; the sequence is TILILDFGSQ…VKNVCGVRDG (199 aa). Residue Cys88 is the Nucleophile of the active site. Active-site residues include His184 and Glu186. Positions 211–419 constitute a GMPS ATP-PPase domain; it reads WSMESFIPKE…LNIPEHLVGR (209 aa). An ATP-binding site is contributed by 239 to 245; that stretch reads SGGVDST. XMP-binding residues include Arg312, Asp481, Lys536, and Glu542.

As to quaternary structure, homodimer. Also forms a small population of homotetramers. Mg(2+) is required as a cofactor.

It localises to the cytoplasm. Its subcellular location is the cytosol. It carries out the reaction XMP + L-glutamine + ATP + H2O = GMP + L-glutamate + AMP + diphosphate + 2 H(+). The protein operates within purine metabolism; GMP biosynthesis; GMP from XMP (L-Gln route): step 1/1. The enzyme is inhibited by ECC1385; although this compound fails to inhibit growth of the organism. Catalyzes the conversion of xanthine monophosphate (XMP) to GMP in the presence of glutamine and ATP through an adenyl-XMP intermediate. The sequence is that of GMP synthase [glutamine-hydrolyzing] from Cryptococcus neoformans var. grubii serotype A (strain H99 / ATCC 208821 / CBS 10515 / FGSC 9487) (Filobasidiella neoformans var. grubii).